The following is a 1436-amino-acid chain: Probable deoxyribonuclease RhsB (1436 aa).

The interval 16–42 (HAGNRPNPPADRPQPCQGKPPTSPGKT) is disordered. The next 2 membrane-spanning stretches (helical) occupy residues 48–68 (FLGA…VAAA) and 70–90 (VFLV…LAVF). YD repeat units follow at residues 486-521 (YNTA…CADG), 569-605 (YDEV…DGSG), 612-647 (YDDA…GPDA), 766-799 (DLLT…PDGS), and 847-879 (YDAR…VSSA).

Belongs to the RHS/WapA nuclease family.

The protein localises to the membrane. Functionally, toxic component of a toxin-immunity protein module, which functions as a cellular contact-dependent growth inhibition (CDI) system. This protein may be a nuclease that is specifically inhibited by its cognate immunity protein RhsBI. Upon expression of the C-terminus (residues 1284-1436) in E.coli growth is inhibited, cells elongate, nucleoids condense and plasmid DNA is degraded; these effects are blocked specifically by cognate immunity protein RshIB. Cell contact is necessary for growth inhibition. This is Probable deoxyribonuclease RhsB (rhsB) from Dickeya dadantii (strain 3937) (Erwinia chrysanthemi (strain 3937)).